A 161-amino-acid polypeptide reads, in one-letter code: MNRQLRFAVAGPEILAAVVSGCSSGNKSAPSSSASSSSTSPSASSGGAAGTKVIIDGKDQNVSGSVVCTNAGGTVNIAIGGAATGIAAVLSDGNPPQVKSVGLGNVNGVTLGYTSGTGQGNASAEKNGNSYKITGTATGVDMANPLQPVNKPFEIDVTCNS.

The first 21 residues, 1 to 21 (MNRQLRFAVAGPEILAAVVSG), serve as a signal peptide directing secretion. Over residues 21 to 46 (GCSSGNKSAPSSSASSSSTSPSASSG) the composition is skewed to low complexity. The interval 21–49 (GCSSGNKSAPSSSASSSSTSPSASSGGAA) is disordered. Cys22 is lipidated: N-palmitoyl cysteine. Cys22 carries the S-diacylglycerol cysteine lipid modification.

It belongs to the mycobacterial 19 kDa antigen family. Modified by Lgt on Cys-22 with an S-linked diacylglycerol with a mixture of C16, C18 and C19 fatty acids, signal peptide is removed by LspA, modifed by Lnt with an amide-linked mixture of C16 and C19 fatty acids.

Its subcellular location is the cell membrane. Might be involved in ligand transport. A host TLR2 agonist, modifies host gene expression in response to pathogen. The polypeptide is Lipoprotein LpqH (lpqH) (Mycobacterium avium).